Consider the following 184-residue polypeptide: UPF0301 protein RSKD131_2391 (184 aa).

Belongs to the UPF0301 (AlgH) family.

The sequence is that of UPF0301 protein RSKD131_2391 from Cereibacter sphaeroides (strain KD131 / KCTC 12085) (Rhodobacter sphaeroides).